A 300-amino-acid chain; its full sequence is Lysenin-related protein 1 (300 aa).

Residues Glu-12–Ser-35 are N-terminal cap domain. Residues Val-36 to Ile-109 are beta-hairpin domain. An N-terminal cap domain region spans residues Pro-110–Leu-158. Positions Val-159–Asn-299 are C-terminal receptor-binding domain. An N-(acyl)-sphingosylphosphocholine-binding residues include Lys-187, Ser-229, Tyr-235, and Tyr-284. Cys-274 and Cys-285 form a disulfide bridge.

The protein belongs to the lysenin family. Binds to sphingomyelin as a monomer by using its C-terminal domain. Forms a nonamer when sphingomyelin/LRP-1 ratio is lower than ca 500. Oligomerization, but not binding, is influenced by the fluidity of sphingomyelin. As to expression, expressed by coelomocytes.

Its subcellular location is the secreted. The protein resides in the target cell membrane. In terms of biological role, pore-forming toxin that specifically binds sphingomyelin in the plasma membrane of various cells. Has hemolytic activity. Binding and hemolytic activities of this toxin are 10 times less than those of lysenin and lysenin-related protein 2. In Eisenia fetida (Red wiggler worm), this protein is Lysenin-related protein 1.